Consider the following 176-residue polypeptide: Caltractin (176 aa).

The tract at residues 1-27 is disordered; that stretch reads MNRAAIAAGKPSGSISTGKPRRKTRAE. EF-hand domains are found at residues 31–66, 67–102, 104–139, and 140–175; these read EMKHEIREAFDLFDADRSGRIDFHELKVAMRALGFD, VKKEEIQRIMNEYDRDQLGEITFQDFEEVMIEKISN, DPTEEILKAFRLFDDDATGRISLKNLRRVAKELSEN, and ISDEELLAMIQEFDRDGDGEIDEEDFIAILRSTSAF. Residues D44, D46, S48, R50, and E55 each coordinate Ca(2+). 5 residues coordinate Ca(2+): D153, D155, D157, E159, and D164.

The protein belongs to the centrin family. In terms of assembly, monomer.

It is found in the cytoplasm. It localises to the cytoskeleton. The protein resides in the microtubule organizing center. Its subcellular location is the centrosome. Functionally, plays a fundamental role in microtubule-organizing center structure and function. This Giardia intestinalis (Giardia lamblia) protein is Caltractin (CAL).